A 78-amino-acid chain; its full sequence is Translational regulator CsrA (78 aa).

It belongs to the CsrA/RsmA family. As to quaternary structure, homodimer; the beta-strands of each monomer intercalate to form a hydrophobic core, while the alpha-helices form wings that extend away from the core.

It localises to the cytoplasm. Functionally, a translational regulator that binds mRNA to regulate translation initiation and/or mRNA stability. Usually binds in the 5'-UTR at or near the Shine-Dalgarno sequence preventing ribosome-binding, thus repressing translation. Its main target seems to be the major flagellin gene, while its function is anatagonized by FliW. The sequence is that of Translational regulator CsrA from Caldicellulosiruptor bescii (strain ATCC BAA-1888 / DSM 6725 / KCTC 15123 / Z-1320) (Anaerocellum thermophilum).